Reading from the N-terminus, the 500-residue chain is Cytochrome P450 monooxygenase astJ (500 aa).

Cys440 contacts heme.

This sequence belongs to the cytochrome P450 family. Heme is required as a cofactor.

Its pathway is secondary metabolite biosynthesis; terpenoid biosynthesis. In terms of biological role, cytochrome P450 monooxygenase; part of the gene cluster that mediates the biosynthesis of astellolides, drimane-type sesquiterpene esters that show antimicrobial, anti-inflammatory, and anti-tumor activities. The first step in astellolide biosynthesis is performed by the sesquiterpene cyclase astC that catalyzes the formation of drimanyl pyrophosphate from farnesyl pyrophosphate. Drimanyl pyrophosphate is then dephosphorylated by the sesquiterpene phosphatase astI to produce drimanyl monophosphate which is further dephosphorylated to drim-8-ene-11-ol by atsK. Drim-8-ene-11-ol is converted to confertifolin, probably by the cytochrome P450 monooxygenase astD and/or the dehydrogenase astE. The cytochrome P450 monooxygenases astB, astF and astJ then hydroxylate confertifolin at C6, C14, or C15 to form trihydroxy confertifolin. The nonribosomal peptide synthetase astA catalyzes ester bond formation between trihydroxy contifolin and benzoic acid (BA) or 4-hydroxy benzoic acid (4HBA), leading to the formation of dideacetyl astellolides A and B, respectively. Finally, the O-acetyltransferase astG converts dideacetyl astellolides A and B into deacetyl astellolides A and B. The polypeptide is Cytochrome P450 monooxygenase astJ (Aspergillus oryzae (strain ATCC 42149 / RIB 40) (Yellow koji mold)).